Reading from the N-terminus, the 434-residue chain is Methyl-coenzyme M reductase subunit beta (434 aa).

Y365 provides a ligand contact to coenzyme M. Coenzyme B is bound at residue G367.

Belongs to the methyl-coenzyme M reductase beta subunit family. In terms of assembly, MCR is a hexamer of two alpha, two beta, and two gamma chains, forming a dimer of heterotrimers. The cofactor is coenzyme F430.

Its subcellular location is the cytoplasm. The catalysed reaction is coenzyme B + methyl-coenzyme M = methane + coenzyme M-coenzyme B heterodisulfide. It functions in the pathway one-carbon metabolism; methyl-coenzyme M reduction; methane from methyl-coenzyme M: step 1/1. Component of the methyl-coenzyme M reductase (MCR) I that catalyzes the reductive cleavage of methyl-coenzyme M (CoM-S-CH3 or 2-(methylthio)ethanesulfonate) using coenzyme B (CoB or 7-mercaptoheptanoylthreonine phosphate) as reductant which results in the production of methane and the mixed heterodisulfide of CoB and CoM (CoM-S-S-CoB). This is the final step in methanogenesis. The sequence is that of Methyl-coenzyme M reductase subunit beta (mcrB) from Methanosarcina barkeri (strain Fusaro / DSM 804).